The primary structure comprises 316 residues: 4-hydroxy-3-methylbut-2-enyl diphosphate reductase (316 aa).

Position 12 (cysteine 12) interacts with [4Fe-4S] cluster. The (2E)-4-hydroxy-3-methylbut-2-enyl diphosphate site is built by histidine 43 and histidine 81. Positions 43 and 81 each coordinate dimethylallyl diphosphate. Histidine 43 and histidine 81 together coordinate isopentenyl diphosphate. Cysteine 103 is a [4Fe-4S] cluster binding site. Histidine 131 provides a ligand contact to (2E)-4-hydroxy-3-methylbut-2-enyl diphosphate. Residue histidine 131 participates in dimethylallyl diphosphate binding. Residue histidine 131 participates in isopentenyl diphosphate binding. The Proton donor role is filled by glutamate 133. Threonine 170 is a binding site for (2E)-4-hydroxy-3-methylbut-2-enyl diphosphate. Residue cysteine 198 coordinates [4Fe-4S] cluster. 3 residues coordinate (2E)-4-hydroxy-3-methylbut-2-enyl diphosphate: serine 226, asparagine 228, and serine 271. Dimethylallyl diphosphate-binding residues include serine 226, asparagine 228, and serine 271. 3 residues coordinate isopentenyl diphosphate: serine 226, asparagine 228, and serine 271.

The protein belongs to the IspH family. [4Fe-4S] cluster is required as a cofactor.

The enzyme catalyses isopentenyl diphosphate + 2 oxidized [2Fe-2S]-[ferredoxin] + H2O = (2E)-4-hydroxy-3-methylbut-2-enyl diphosphate + 2 reduced [2Fe-2S]-[ferredoxin] + 2 H(+). The catalysed reaction is dimethylallyl diphosphate + 2 oxidized [2Fe-2S]-[ferredoxin] + H2O = (2E)-4-hydroxy-3-methylbut-2-enyl diphosphate + 2 reduced [2Fe-2S]-[ferredoxin] + 2 H(+). It functions in the pathway isoprenoid biosynthesis; dimethylallyl diphosphate biosynthesis; dimethylallyl diphosphate from (2E)-4-hydroxy-3-methylbutenyl diphosphate: step 1/1. The protein operates within isoprenoid biosynthesis; isopentenyl diphosphate biosynthesis via DXP pathway; isopentenyl diphosphate from 1-deoxy-D-xylulose 5-phosphate: step 6/6. Its function is as follows. Catalyzes the conversion of 1-hydroxy-2-methyl-2-(E)-butenyl 4-diphosphate (HMBPP) into a mixture of isopentenyl diphosphate (IPP) and dimethylallyl diphosphate (DMAPP). Acts in the terminal step of the DOXP/MEP pathway for isoprenoid precursor biosynthesis. This is 4-hydroxy-3-methylbut-2-enyl diphosphate reductase from Geobacillus kaustophilus (strain HTA426).